We begin with the raw amino-acid sequence, 1358 residues long: Xanthine dehydrogenase (1358 aa).

The 90-residue stretch at 18-107 (NQLLFFLNGE…GMAVTTIEGL (90 aa)) folds into the 2Fe-2S ferredoxin-type domain. 8 residues coordinate [2Fe-2S] cluster: C56, C61, C64, C89, C129, C132, C164, and C166. The 195-residue stretch at 253-447 (FTGSRVTWYT…ESVFIPYTRP (195 aa)) folds into the FAD-binding PCMH-type domain. FAD is bound by residues 281-288 (IVVGNTEI), F366, 376-380 (SIGGN), D389, L437, and K455. Q805 and F836 together coordinate Mo-molybdopterin. Substrate is bound by residues E840 and R918. R950 is a binding site for Mo-molybdopterin. Y952 and T1048 together coordinate substrate. A1117 contacts Mo-molybdopterin. The active-site Proton acceptor is E1302.

Belongs to the xanthine dehydrogenase family. As to quaternary structure, homodimer. The cofactor is FAD. Mo-molybdopterin serves as cofactor. [2Fe-2S] cluster is required as a cofactor.

Its subcellular location is the peroxisome. The catalysed reaction is xanthine + NAD(+) + H2O = urate + NADH + H(+). The enzyme catalyses hypoxanthine + NAD(+) + H2O = xanthine + NADH + H(+). In terms of biological role, key enzyme in purine degradation. Catalyzes the oxidation of hypoxanthine to xanthine. Catalyzes the oxidation of xanthine to uric acid. This is Xanthine dehydrogenase (xdh) from Dictyostelium discoideum (Social amoeba).